We begin with the raw amino-acid sequence, 249 residues long: 2-C-methyl-D-erythritol 4-phosphate cytidylyltransferase (249 aa).

This sequence belongs to the IspD/TarI cytidylyltransferase family. IspD subfamily.

It catalyses the reaction 2-C-methyl-D-erythritol 4-phosphate + CTP + H(+) = 4-CDP-2-C-methyl-D-erythritol + diphosphate. Its pathway is isoprenoid biosynthesis; isopentenyl diphosphate biosynthesis via DXP pathway; isopentenyl diphosphate from 1-deoxy-D-xylulose 5-phosphate: step 2/6. Its function is as follows. Catalyzes the formation of 4-diphosphocytidyl-2-C-methyl-D-erythritol from CTP and 2-C-methyl-D-erythritol 4-phosphate (MEP). The chain is 2-C-methyl-D-erythritol 4-phosphate cytidylyltransferase from Shewanella oneidensis (strain ATCC 700550 / JCM 31522 / CIP 106686 / LMG 19005 / NCIMB 14063 / MR-1).